The following is a 1427-amino-acid chain: Tonsoku-like protein (1427 aa).

Residues M1–N21 are disordered. A compositionally biased stretch (low complexity) spans L10–N21. 8 TPR repeats span residues A27–L60, A67–V100, Q107–R147, A162–N195, Y202–M235, S242–Q275, L311–L344, and A352–N385. The interval L465–G502 is disordered. Residues Q469–E501 show a composition bias toward acidic residues. ANK repeat units lie at residues K522–V551, C555–D584, and G591–V620. Disordered stretches follow at residues P692–G801, K865–Q922, and I941–P961. The span at D742–P761 shows a compositional bias: low complexity. Positions S773 to L783 are enriched in polar residues. Basic and acidic residues predominate over residues S871–T880. Over residues S881–I890 the composition is skewed to polar residues. Low complexity predominate over residues S899–K910. LRR repeat units follow at residues Q1113–A1137, M1141–T1168, F1174–S1197, T1234–T1258, D1293–R1316, C1321–G1346, and S1377–Q1400.

The protein belongs to the Tonsoku family. In terms of assembly, component of the MMS22L-TONSL complex. Binds histones, with a strong preference for histone H3.1 (histones H3.1 and H3-4/H3.1t).

The protein resides in the nucleus. It localises to the chromosome. It is found in the cytoplasm. In terms of biological role, component of the MMS22L-TONSL complex, a complex that promotes homologous recombination-mediated repair of double-strand breaks (DSBs) at stalled or collapsed replication forks. The MMS22L-TONSL complex is required to maintain genome integrity during DNA replication. It mediates the assembly of RAD51 filaments on single-stranded DNA (ssDNA): the MMS22L-TONSL complex is recruited to DSBs following histone replacement by histone chaperones and eviction of the replication protein A complex (RPA/RP-A) from DSBs. Following recruitment to DSBs, the TONSL-MMS22L complex promotes recruitment of RAD51 filaments and subsequent homologous recombination. Within the complex, TONSL acts as a histone reader, which recognizes and binds newly synthesized histones following their replacement by histone chaperones. This is Tonsoku-like protein (tonsl) from Danio rerio (Zebrafish).